The chain runs to 257 residues: MQVDIIKQVRDTKPLVHHLTNQVVMNFSANGLLSFGGSPIMAKAIEEVEQIAAISNAVLINIGTLTSTELESMIAAGKTANKHNIPVLLDPVGVAATSFRRNAIDKILEEVRPTVIKGNAGELASLVNINLEAKGVDSIGDGNLDVIAQKVSEKYNTAVVVTGETDVIYVDNHLIHNGTGHHYLSSITGSGCLLGSIIAACLTTKSTLKDQLMTAVSFYGLSASYAANQENVHGTGSFLPVFIDSLSKMPQELTEGE.

Met-41 lines the substrate pocket. Lys-117 and Thr-162 together coordinate ATP. Gly-189 lines the substrate pocket.

It belongs to the Thz kinase family. Mg(2+) serves as cofactor.

The catalysed reaction is 5-(2-hydroxyethyl)-4-methylthiazole + ATP = 4-methyl-5-(2-phosphooxyethyl)-thiazole + ADP + H(+). Its pathway is cofactor biosynthesis; thiamine diphosphate biosynthesis; 4-methyl-5-(2-phosphoethyl)-thiazole from 5-(2-hydroxyethyl)-4-methylthiazole: step 1/1. Its function is as follows. Catalyzes the phosphorylation of the hydroxyl group of 4-methyl-5-beta-hydroxyethylthiazole (THZ). The chain is Hydroxyethylthiazole kinase 1 from Oceanobacillus iheyensis (strain DSM 14371 / CIP 107618 / JCM 11309 / KCTC 3954 / HTE831).